An 86-amino-acid chain; its full sequence is MRTTLTLDDDVVRLVEDAVHRERRPMKQVINDALRRALAPPVKRQEQYRLEPHESAVRSGLDLAGFNKLADELEDEALLDATRRAR.

In terms of biological role, antitoxin component of a type II toxin-antitoxin (TA) system. Upon expression in M.smegmatis neutralizes the effect of cognate toxin VapC33. This chain is Antitoxin VapB33 (vapB33), found in Mycobacterium tuberculosis (strain ATCC 25618 / H37Rv).